A 1221-amino-acid polypeptide reads, in one-letter code: DNA replication helicase (1221 aa).

Positions proline 692–lysine 701 match the Nuclear localization signal motif. ATP is bound at residue glycine 917–serine 924. Residues isoleucine 967–histidine 981 constitute a DNA-binding region (H-T-H motif).

As to quaternary structure, interacts with IE1 and LEF-3.

It is found in the host nucleus. It carries out the reaction ATP + H2O = ADP + phosphate + H(+). Essential for initiation of viral DNA replication, it may contribute to other functions such as controlling the switch to the late phase and leading to the inhibition of host protein synthesis. Required for late and very late gene expression. This chain is DNA replication helicase (HELI), found in Lepidoptera (butterflies and moths).